Here is a 159-residue protein sequence, read N- to C-terminus: MGRGKIEIKRIDNATSRQVTFSKRRSGLFKKARELSILCDAEVGLLVFSSTSRLYDFASSSMKSIIERYNETKEDPHQTMNASSEAKLWQQEAASLRQQLHNLQEYHRQLLGQQLSGLDVEDLQNLESKLEMSLKNIRLRKDNVMMDQIQELSRKVVTT.

Residues 1–61 (MGRGKIEIKR…SRLYDFASSS (61 aa)) enclose the MADS-box domain. Residues 86-159 (AKLWQQEAAS…QELSRKVVTT (74 aa)) form the K-box domain.

As to expression, expressed in seedling roots and developing seeds.

The protein resides in the nucleus. Its function is as follows. Probable transcription factor. This is MADS-box transcription factor 23 (MADS23) from Oryza sativa subsp. japonica (Rice).